We begin with the raw amino-acid sequence, 63 residues long: ATP synthase subunit epsilon, mitochondrial (63 aa).

As to quaternary structure, F-type ATP synthases have 2 components, the catalytic core F(1) and the membrane-embedded component F(0), linked together by a central stalk and a peripheral stalk. The central stalk, also called rotor shaft, is often seen as part of F(1). The peripheral stalk is seen as part of F(0). F(0) contains the membrane channel next to the rotor. F-type ATP synthases form dimers but each monomer functions independently in ATP generation. The dimer consists of 18 different polypeptides: ATP1 (subunit alpha, part of F(1), 3 molecules per monomer), ATP2 (subunit beta, part of F(1), 3 molecules per monomer), ATP3 (subunit gamma, part of the central stalk), ATP4 (subunit b, part of the peripheral stalk), ATP5/OSCP (subunit 5/OSCP, part of the peripheral stalk), ATP6 (subunit a, part of the peripheral stalk), ATP7 (subunit d, part of the peripheral stalk), ATP8 (subunit 8, part of the peripheral stalk), OLI1 (subunit c, part of the rotor, 10 molecules per monomer), ATP14 (subunit h, part of the peripheral stalk), ATP15 (subunit epsilon, part of the central stalk), ATP16 (subunit delta, part of the central stalk), ATP17 (subunit f, part of the peripheral stalk), ATP18 (subunit i/j, part of the peripheral stalk). Dimer-specific subunits are ATP19 (subunit k, at interface between monomers), ATP20 (subunit g, at interface between monomers), TIM11 (subunit e, at interface between monomers). Also contains subunit L.

Its subcellular location is the mitochondrion inner membrane. Mitochondrial membrane ATP synthase (F(1)F(0) ATP synthase or Complex V) produces ATP from ADP in the presence of a proton gradient across the membrane which is generated by electron transport complexes of the respiratory chain. F-type ATP synthases consist of two structural domains, F(1) - containing the extramembraneous catalytic core, and F(0) - containing the membrane proton channel, linked together by a central stalk and a peripheral stalk. During catalysis, ATP synthesis in the catalytic domain of F(1) is coupled via a rotary mechanism of the central stalk subunits to proton translocation. Part of the complex F(1) domain and the central stalk which is part of the complex rotary element. Rotation of the central stalk against the surrounding alpha/ATP1(3)beta/ATP2(3) subunits leads to hydrolysis of ATP in three separate catalytic sites on the beta/ATP2 subunits. The sequence is that of ATP synthase subunit epsilon, mitochondrial from Pichia angusta (Yeast).